A 245-amino-acid chain; its full sequence is Uridylate kinase (245 aa).

Lys-20–Gly-23 provides a ligand contact to ATP. A UMP-binding site is contributed by Gly-62. ATP contacts are provided by Gly-63 and Arg-67. Residues Asp-81 and Ile-142–Thr-149 contribute to the UMP site. ATP is bound by residues Thr-169, Gln-170, Tyr-175, and Asp-178.

Belongs to the UMP kinase family. In terms of assembly, homohexamer.

It is found in the cytoplasm. The catalysed reaction is UMP + ATP = UDP + ADP. It functions in the pathway pyrimidine metabolism; CTP biosynthesis via de novo pathway; UDP from UMP (UMPK route): step 1/1. Its activity is regulated as follows. Inhibited by UTP. Functionally, catalyzes the reversible phosphorylation of UMP to UDP. The polypeptide is Uridylate kinase (Anaplasma marginale (strain St. Maries)).